Here is a 414-residue protein sequence, read N- to C-terminus: Glutathione gamma-glutamylcysteinyltransferase (414 aa).

The region spanning 37–256 (QLKKSFYKRQ…GYVLLEPMHI (220 aa)) is the Peptidase C83 domain.

Belongs to the phytochelatin synthase family.

It catalyses the reaction [Glu(-Cys)](n)-Gly + glutathione + H(+) = [Glu(-Cys)](n+1)-Gly + glycine. In terms of biological role, required for detoxification of heavy metals such as cadmium and arsenate. This chain is Glutathione gamma-glutamylcysteinyltransferase, found in Schizosaccharomyces pombe (strain 972 / ATCC 24843) (Fission yeast).